We begin with the raw amino-acid sequence, 392 residues long: Aminomethyltransferase, mitochondrial (392 aa).

Residues 1–16 (MLRAGCRAALARRHLS) constitute a mitochondrion transit peptide. Glu-221, Arg-250, and Tyr-388 together coordinate substrate.

The protein belongs to the GcvT family. As to quaternary structure, the glycine cleavage system is composed of four proteins: P, T, L and H.

The protein resides in the mitochondrion. It carries out the reaction N(6)-[(R)-S(8)-aminomethyldihydrolipoyl]-L-lysyl-[protein] + (6S)-5,6,7,8-tetrahydrofolate = N(6)-[(R)-dihydrolipoyl]-L-lysyl-[protein] + (6R)-5,10-methylene-5,6,7,8-tetrahydrofolate + NH4(+). The glycine cleavage system catalyzes the degradation of glycine. The protein is Aminomethyltransferase, mitochondrial of Gallus gallus (Chicken).